Consider the following 252-residue polypeptide: Phosphate import ATP-binding protein PstB (252 aa).

The ABC transporter domain maps to Ile-6–Ile-247. Gly-38 to Ser-45 contributes to the ATP binding site.

Belongs to the ABC transporter superfamily. Phosphate importer (TC 3.A.1.7) family. As to quaternary structure, the complex is composed of two ATP-binding proteins (PstB), two transmembrane proteins (PstC and PstA) and a solute-binding protein (PstS).

It localises to the cell membrane. It catalyses the reaction phosphate(out) + ATP + H2O = ADP + 2 phosphate(in) + H(+). In terms of biological role, part of the ABC transporter complex PstSACB involved in phosphate import. Responsible for energy coupling to the transport system. The protein is Phosphate import ATP-binding protein PstB of Methanosphaera stadtmanae (strain ATCC 43021 / DSM 3091 / JCM 11832 / MCB-3).